The primary structure comprises 276 residues: HTH-type transcriptional activator RhaR (276 aa).

The HTH araC/xylS-type domain maps to 174 to 272 (ESLFSALNQS…SCTPTEYRSR (99 aa)). 2 DNA-binding regions (H-T-H motif) span residues 191–212 (ADFCRQHQLAVSSVRRIFKQQT) and 239–262 (VANIAIRCGYSDSNYFSSVFGKTF).

In terms of assembly, binds DNA as a dimer.

Its subcellular location is the cytoplasm. Its function is as follows. Activates expression of the rhaSR operon in response to L-rhamnose. In Mannheimia succiniciproducens (strain KCTC 0769BP / MBEL55E), this protein is HTH-type transcriptional activator RhaR.